A 598-amino-acid polypeptide reads, in one-letter code: Elongation factor 4 (598 aa).

The 183-residue stretch at 4 to 186 (INIRNFAIIA…AIVSRLPAPS (183 aa)) folds into the tr-type G domain. GTP is bound by residues 16–21 (DHGKST) and 133–136 (NKID).

This sequence belongs to the TRAFAC class translation factor GTPase superfamily. Classic translation factor GTPase family. LepA subfamily.

Its subcellular location is the cell inner membrane. It catalyses the reaction GTP + H2O = GDP + phosphate + H(+). Required for accurate and efficient protein synthesis under certain stress conditions. May act as a fidelity factor of the translation reaction, by catalyzing a one-codon backward translocation of tRNAs on improperly translocated ribosomes. Back-translocation proceeds from a post-translocation (POST) complex to a pre-translocation (PRE) complex, thus giving elongation factor G a second chance to translocate the tRNAs correctly. Binds to ribosomes in a GTP-dependent manner. This is Elongation factor 4 from Ehrlichia ruminantium (strain Gardel).